A 428-amino-acid chain; its full sequence is Adenylosuccinate synthetase (428 aa).

GTP contacts are provided by residues 13–19 (GDEGKGK) and 41–43 (GHT). Asp14 acts as the Proton acceptor in catalysis. Residues Asp14 and Gly41 each coordinate Mg(2+). Residues 14–17 (DEGK), 39–42 (NAGH), Thr130, Arg144, Gln223, Thr238, and Arg302 contribute to the IMP site. Catalysis depends on His42, which acts as the Proton donor. 298–304 (ASTGRRR) provides a ligand contact to substrate. Residues Arg304, 330-332 (KLD), and 412-414 (STG) contribute to the GTP site.

The protein belongs to the adenylosuccinate synthetase family. Homodimer. Mg(2+) is required as a cofactor.

The protein resides in the cytoplasm. The catalysed reaction is IMP + L-aspartate + GTP = N(6)-(1,2-dicarboxyethyl)-AMP + GDP + phosphate + 2 H(+). It participates in purine metabolism; AMP biosynthesis via de novo pathway; AMP from IMP: step 1/2. Plays an important role in the de novo pathway of purine nucleotide biosynthesis. Catalyzes the first committed step in the biosynthesis of AMP from IMP. The polypeptide is Adenylosuccinate synthetase (Dichelobacter nodosus (strain VCS1703A)).